A 154-amino-acid chain; its full sequence is AP-1 complex subunit sigma-3 (154 aa).

The protein belongs to the adaptor complexes small subunit family. Adaptor protein complex 1 (AP-1) is a heterotetramer composed of two large adaptins (gamma-type subunit AP1G1 and beta-type subunit AP1B1), a medium adaptin (mu-type subunit AP1M1 or AP1M2) and a small adaptin (sigma-type subunit AP1S1 or AP1S2 or AP1S3). In terms of tissue distribution, widely expressed.

The protein resides in the golgi apparatus. It localises to the cytoplasmic vesicle membrane. The protein localises to the membrane. Its subcellular location is the clathrin-coated pit. Subunit of clathrin-associated adaptor protein complex 1 that plays a role in protein sorting in the late-Golgi/trans-Golgi network (TGN) and/or endosomes. The AP complexes mediate both the recruitment of clathrin to membranes and the recognition of sorting signals within the cytosolic tails of transmembrane cargo molecules. Involved in TLR3 trafficking. This is AP-1 complex subunit sigma-3 (AP1S3) from Homo sapiens (Human).